Here is a 295-residue protein sequence, read N- to C-terminus: Ribosome production factor 1 (295 aa).

Positions 24-47 (HEKNKERHTMRRKRAKEERENPEL) are disordered. Residues 38-47 (AKEERENPEL) are compositionally biased toward basic and acidic residues. The Brix domain occupies 93–276 (PKIFLTTNVN…LKRLQRGIKE (184 aa)). The RNA-binding stretch occupies residues 254–271 (VGLQELGPQFTLKLKRLQ).

Part of a complex that includes BRX1, RPF1, RPF2 and SSF1 or SSF2.

The protein resides in the nucleus. It localises to the nucleolus. Its function is as follows. Essential protein. Required for biogenesis of the 60S ribosomal subunit. The sequence is that of Ribosome production factor 1 (RPF1) from Saccharomyces cerevisiae (strain ATCC 204508 / S288c) (Baker's yeast).